Here is a 352-residue protein sequence, read N- to C-terminus: Maleylacetate reductase (352 aa).

This sequence belongs to the iron-containing alcohol dehydrogenase family.

The enzyme catalyses 3-oxoadipate + NAD(+) = maleylacetate + NADH + H(+). It catalyses the reaction 3-oxoadipate + NADP(+) = maleylacetate + NADPH + H(+). It functions in the pathway xenobiotic degradation; (2,4,5-trichlorophenoxy)acetate degradation. This Burkholderia cepacia (Pseudomonas cepacia) protein is Maleylacetate reductase (tftE).